We begin with the raw amino-acid sequence, 220 residues long: 2-dehydro-3-deoxy-phosphogluconate aldolase (220 aa).

Glu48 (proton acceptor) is an active-site residue. The pyruvate site is built by Arg52, Thr76, and Lys136. Lys136 serves as the catalytic Schiff-base intermediate with substrate.

The protein belongs to the KHG/KDPG aldolase family. Homotrimer.

The enzyme catalyses 2-dehydro-3-deoxy-6-phospho-D-gluconate = D-glyceraldehyde 3-phosphate + pyruvate. It functions in the pathway carbohydrate acid metabolism; 2-dehydro-3-deoxy-D-gluconate degradation; D-glyceraldehyde 3-phosphate and pyruvate from 2-dehydro-3-deoxy-D-gluconate: step 2/2. Involved in the degradation of glucose via the Entner-Doudoroff pathway. Catalyzes the reversible, stereospecific retro-aldol cleavage of 2-keto-3-deoxy-6-phosphogluconate (KDPG) to pyruvate and D-glyceraldehyde-3-phosphate. This chain is 2-dehydro-3-deoxy-phosphogluconate aldolase (eda), found in Pseudomonas aeruginosa (strain ATCC 15692 / DSM 22644 / CIP 104116 / JCM 14847 / LMG 12228 / 1C / PRS 101 / PAO1).